Here is a 285-residue protein sequence, read N- to C-terminus: MEMO1 family protein Igni_0992 (285 aa).

The protein belongs to the MEMO1 family.

The protein is MEMO1 family protein Igni_0992 of Ignicoccus hospitalis (strain KIN4/I / DSM 18386 / JCM 14125).